The following is a 425-amino-acid chain: Serine--tRNA ligase (425 aa).

An L-serine-binding site is contributed by 233–235 (TAE). Residue 264 to 266 (RRE) participates in ATP binding. Glutamate 287 is an L-serine binding site. 351–354 (EISS) is an ATP binding site. Serine 387 is an L-serine binding site.

It belongs to the class-II aminoacyl-tRNA synthetase family. Type-1 seryl-tRNA synthetase subfamily. In terms of assembly, homodimer. The tRNA molecule binds across the dimer.

The protein localises to the cytoplasm. It catalyses the reaction tRNA(Ser) + L-serine + ATP = L-seryl-tRNA(Ser) + AMP + diphosphate + H(+). It carries out the reaction tRNA(Sec) + L-serine + ATP = L-seryl-tRNA(Sec) + AMP + diphosphate + H(+). Its pathway is aminoacyl-tRNA biosynthesis; selenocysteinyl-tRNA(Sec) biosynthesis; L-seryl-tRNA(Sec) from L-serine and tRNA(Sec): step 1/1. Catalyzes the attachment of serine to tRNA(Ser). Is also able to aminoacylate tRNA(Sec) with serine, to form the misacylated tRNA L-seryl-tRNA(Sec), which will be further converted into selenocysteinyl-tRNA(Sec). This Thermotoga sp. (strain RQ2) protein is Serine--tRNA ligase.